The primary structure comprises 1033 residues: SIT4-associating protein SAP190 (1033 aa).

3 disordered regions span residues D32–S82, P147–T213, and F768–F1033. Positions I158–D170 are enriched in basic and acidic residues. Positions A171–N182 are enriched in acidic residues. Basic and acidic residues predominate over residues D183 to D195. S774 is modified (phosphoserine). Acidic residues-rich tracts occupy residues S784–G793 and E825–D838. Phosphoserine occurs at positions 857, 862, and 892. Residues D858–G879 show a composition bias toward basic and acidic residues. Polar residues predominate over residues S909–F924. Positions G932–D944 are enriched in acidic residues. The residue at position 990 (T990) is a Phosphothreonine. S991 bears the Phosphoserine mark. Residues I1000 to N1018 are compositionally biased toward acidic residues.

Belongs to the SAPS family. As to quaternary structure, associates with the SIT4 protein phosphatase catalytic subunit in a cell-cycle-dependent manner. In terms of processing, hyperphosphorylated in the absence of SIT4.

The protein resides in the cytoplasm. In terms of biological role, positive regulator of protein phosphatase SIT4. Involved in the general amino acid control (GAAC) response regulated by TOR. Involved in the dephosphorylation of the elongator complex subunit IKI3. This is SIT4-associating protein SAP190 (SAP190) from Saccharomyces cerevisiae (strain ATCC 204508 / S288c) (Baker's yeast).